The chain runs to 172 residues: Large ribosomal subunit protein uL10 (172 aa).

The protein belongs to the universal ribosomal protein uL10 family. In terms of assembly, part of the ribosomal stalk of the 50S ribosomal subunit. The N-terminus interacts with L11 and the large rRNA to form the base of the stalk. The C-terminus forms an elongated spine to which L12 dimers bind in a sequential fashion forming a multimeric L10(L12)X complex.

Forms part of the ribosomal stalk, playing a central role in the interaction of the ribosome with GTP-bound translation factors. In Beijerinckia indica subsp. indica (strain ATCC 9039 / DSM 1715 / NCIMB 8712), this protein is Large ribosomal subunit protein uL10.